The following is a 130-amino-acid chain: Putative antitoxin VapB50 (130 aa).

Possibly the antitoxin component of a type II toxin-antitoxin (TA) system. Its cognate toxin is VapC50. The chain is Putative antitoxin VapB50 from Mycobacterium tuberculosis (strain ATCC 25618 / H37Rv).